The primary structure comprises 444 residues: Transcription activator AKTR-1 (444 aa).

Residues 16-43 (CDFCTQSKLRCNKNKPSCRRCTIQQQPC) constitute a DNA-binding region (zn(2)-C6 fungal-type). A disordered region spans residues 49–87 (RRTGRPPKHPRKANDCQEANGQHGEQDPVTSTPGGSCQQ). Over residues 50–59 (RTGRPPKHPR) the composition is skewed to basic residues. Polar residues predominate over residues 76–87 (PVTSTPGGSCQQ).

Its subcellular location is the nucleus. Transcription factor that regulates the expression of the gene clusters that mediate the biosynthesis of the host-selective toxins (HSTs) AK-toxins responsible for Japanese pear black spot disease by the Japanese pear pathotype. AK-toxins are esters of 9,10-epoxy 8-hydroxy 9-methyldecatrienoic acid (EDA). On cellular level, AK-toxins affect plasma membrane of susceptible cells and cause a sudden increase in loss of K(+) after a few minutes of toxin treatment. The protein is Transcription activator AKTR-1 of Alternaria alternata (Alternaria rot fungus).